A 455-amino-acid chain; its full sequence is Argininosuccinate lyase (455 aa).

It belongs to the lyase 1 family. Argininosuccinate lyase subfamily.

The protein resides in the cytoplasm. It carries out the reaction 2-(N(omega)-L-arginino)succinate = fumarate + L-arginine. Its pathway is amino-acid biosynthesis; L-arginine biosynthesis; L-arginine from L-ornithine and carbamoyl phosphate: step 3/3. The polypeptide is Argininosuccinate lyase (Shewanella baltica (strain OS223)).